A 101-amino-acid chain; its full sequence is uncharacterized protein (101 aa).

3 consecutive transmembrane segments (helical) span residues 10–32 (FLPN…FFLY), 45–67 (LGIW…LPLI), and 77–99 (IAFT…ILSH).

It localises to the cell membrane. This is an uncharacterized protein from Bacillus subtilis (strain 168).